Consider the following 539-residue polypeptide: MDSQRTLLVLLLALVSFLLFQQWQVAKNPAPQAVEQAQTSSTLPAPSFADELDPAPAQQASAKLITVTTDVLTLSIDTVGGDVVAADLNQYSAELNSANAFELLRDTQGHQFIAQSGLVGPQGIDLSSNNRPSYQVSADSFTLADDQNELRIPMTYQANGLEYTKTFILKRGSYAIDVEFDVINKSGNNATLGMYAHLRQNLMDAGGSITMPTYRGGAYSTEDTRYKKYSFEDMQDRNLSLTLTNGQGWAAMIQHYFAAAWIPRNEPGANLYTRVIGNMGDIGVRMPNKTIADGDSAHFTATLWAGPKLQDQMAEVAPNLDLVVDYGWLWFIAKPLHWLLSVIQSFVGNWGVAIICLTFIVRGAMYPLTKAQYTSMAKMRMLQPKLQAMRERIGDDRQRMSQEMMELYKKEKVNPLGGCLPLILQMPIFIALYWALMESVELRHSPFILWIHDLSAQDPYFILPLLMGGSMFLIQKMSPTTVTDPMQQKIMTFMPVMFTFFFLWFPSGLVLYWLVSNIVTLIQQSLIYKALEKKGLHTK.

The next 5 membrane-spanning stretches (helical) occupy residues 6-26 (TLLV…WQVA), 341-361 (SVIQ…TFIV), 416-436 (LGGC…YWAL), 454-474 (LSAQ…MFLI), and 495-515 (PVMF…YWLV).

It belongs to the OXA1/ALB3/YidC family. Type 1 subfamily. In terms of assembly, interacts with the Sec translocase complex via SecD. Specifically interacts with transmembrane segments of nascent integral membrane proteins during membrane integration.

Its subcellular location is the cell inner membrane. Functionally, required for the insertion and/or proper folding and/or complex formation of integral membrane proteins into the membrane. Involved in integration of membrane proteins that insert both dependently and independently of the Sec translocase complex, as well as at least some lipoproteins. Aids folding of multispanning membrane proteins. In Vibrio vulnificus (strain CMCP6), this protein is Membrane protein insertase YidC.